Consider the following 373-residue polypeptide: Transaldolase (373 aa).

K143 acts as the Schiff-base intermediate with substrate in catalysis.

This sequence belongs to the transaldolase family. Type 2 subfamily.

Its subcellular location is the cytoplasm. It carries out the reaction D-sedoheptulose 7-phosphate + D-glyceraldehyde 3-phosphate = D-erythrose 4-phosphate + beta-D-fructose 6-phosphate. It functions in the pathway carbohydrate degradation; pentose phosphate pathway; D-glyceraldehyde 3-phosphate and beta-D-fructose 6-phosphate from D-ribose 5-phosphate and D-xylulose 5-phosphate (non-oxidative stage): step 2/3. In terms of biological role, transaldolase is important for the balance of metabolites in the pentose-phosphate pathway. In Mycobacterium tuberculosis (strain ATCC 25618 / H37Rv), this protein is Transaldolase (tal).